The sequence spans 703 residues: Calcium-responsive transcription factor (703 aa).

3 disordered regions span residues 1–61 (MEQS…QNIP), 130–150 (GPLV…SDRN), and 517–539 (GNSQ…SLSP). A compositionally biased stretch (basic and acidic residues) spans 9 to 22 (KVNHNDSEESKTDS). Over residues 23–34 (QHLTYMDSSEPS) the composition is skewed to polar residues.

The protein resides in the nucleus. Its function is as follows. Acts as a transcriptional activator that mediates the calcium- and neuron-selective induction of BDNF exon III transcription. Binds to the consensus calcium-response element CaRE1 5'-CTATTTCGAG-3' sequence. In Bos taurus (Bovine), this protein is Calcium-responsive transcription factor (CARF).